We begin with the raw amino-acid sequence, 135 residues long: Small ribosomal subunit protein bS16 (135 aa).

The disordered stretch occupies residues 94-135 (IGTEMETWQQRNDSRLKRGLDRKAIRRKRKKEAEAKEKESAG). Composition is skewed to basic and acidic residues over residues 105–116 (NDSRLKRGLDRK) and 124–135 (KEAEAKEKESAG).

It belongs to the bacterial ribosomal protein bS16 family.

The chain is Small ribosomal subunit protein bS16 from Chloroherpeton thalassium (strain ATCC 35110 / GB-78).